The sequence spans 178 residues: ATP-dependent protease subunit HslV (178 aa).

Residue threonine 7 is part of the active site. Na(+)-binding residues include glycine 162, cysteine 165, and threonine 168.

The protein belongs to the peptidase T1B family. HslV subfamily. In terms of assembly, a double ring-shaped homohexamer of HslV is capped on each side by a ring-shaped HslU homohexamer. The assembly of the HslU/HslV complex is dependent on binding of ATP.

Its subcellular location is the cytoplasm. It catalyses the reaction ATP-dependent cleavage of peptide bonds with broad specificity.. Allosterically activated by HslU binding. In terms of biological role, protease subunit of a proteasome-like degradation complex believed to be a general protein degrading machinery. The protein is ATP-dependent protease subunit HslV of Ralstonia nicotianae (strain ATCC BAA-1114 / GMI1000) (Ralstonia solanacearum).